The primary structure comprises 591 residues: Potassium channel KAT4 (591 aa).

Residues 1-32 (MAARSELLRPAFGEASPSLGRFVINPHSCSYR) are Cytoplasmic-facing. The helical transmembrane segment at 33 to 53 (WWHMFLIMLVLYSAWASPFEL) threads the bilayer. Residues 54 to 63 (SMEKAASIAL) lie on the Extracellular side of the membrane. A helical transmembrane segment spans residues 64-84 (VVTDLVVDVFFAIDIALSFFV). The Cytoplasmic segment spans residues 85–109 (AYRDTSTGLLITDRRKITMRYLKRP). Residues 110–130 (CFALDVASTIPLQIIYQLVTG) traverse the membrane as a helical segment. Residues 131 to 137 (KRQGLWG) lie on the Extracellular side of the membrane. The helical; Voltage-sensor transmembrane segment at 138–158 (LLNLLRLWRLRRVSKLFARVE) threads the bilayer. Over 159–172 (KDIRFNYLWTRLIK) the chain is Cytoplasmic. The chain crosses the membrane as a helical span at residues 173–193 (LLCVTLFALHFAACIYLWMAF). Residues 194–220 (NYKIKELTWIGSQIHSFEDRSVWFCYT) lie on the Extracellular side of the membrane. An intramembrane region (pore-forming) is located at residues 221–240 (CAVYWSITTLATVGYGDLHA). Topologically, residues 241–246 (TNIGEM) are extracellular. The chain crosses the membrane as a helical span at residues 247-267 (LFSIAFMLFNMGLTSYIIGNI). Residues 268–591 (TNLVVRETSN…IRDGDHLLFS (324 aa)) lie on the Cytoplasmic side of the membrane. 349–469 (LFQGVSDSLI…YIVFSNFIQY (121 aa)) lines the a nucleoside 3',5'-cyclic phosphate pocket. The KHA domain maps to 521 to 591 (RVVIHEQLPN…IRDGDHLLFS (71 aa)).

It belongs to the potassium channel family. Plant (TC 1.A.1.4) subfamily.

It is found in the membrane. In terms of biological role, probable inward-rectifying potassium channel. Assuming opened or closed conformations in response to the voltage difference across the membrane, the channel is activated by hyperpolarization. The protein is Potassium channel KAT4 of Oryza sativa subsp. japonica (Rice).